The chain runs to 422 residues: FAD-dependent monooxygenase ptmM (422 aa).

Residues 8–24 traverse the membrane as a helical segment; the sequence is VIIVGGSIAGLTLAHCL. Residues Glu-35, Gly-49, Arg-108, Asp-308, and Ala-321 each coordinate FAD.

The protein belongs to the paxM FAD-dependent monooxygenase family. Requires FAD as cofactor.

The protein resides in the membrane. It functions in the pathway secondary metabolite biosynthesis. In terms of biological role, FAD-dependent monooxygenase; part of the gene cluster that mediates the biosynthesis of the indole diterpenes penitrems. The geranylgeranyl diphosphate (GGPP) synthase ptmG catalyzes the first step in penitrem biosynthesis via conversion of farnesyl pyrophosphate and isopentyl pyrophosphate into geranylgeranyl pyrophosphate (GGPP). Condensation of indole-3-glycerol phosphate with GGPP by the prenyl transferase ptmC then forms 3-geranylgeranylindole (3-GGI). Epoxidation by the FAD-dependent monooxygenase ptmM leads to a epoxidized-GGI that is substrate of the terpene cyclase ptmB for cyclization to yield paspaline. Paspaline is subsequently converted to 13-desoxypaxilline by the cytochrome P450 monooxygenase ptmP, the latter being then converted to paxilline by the cytochrome P450 monooxygenase ptmQ. Paxilline is converted to beta-paxitriol via C-10 ketoreduction by the short-chain dehydrogenase ptmH which can be monoprenylated at the C-20 by the indole diterpene prenyltransferase ptmD. A two-step elimination (acetylation and elimination) process performed by the O-acetyltransferase ptmV and ptmI leads to the production of the prenylated form of penijanthine. The FAD-linked oxidoreductase ptmO then converts the prenylated form of penijanthine into PC-M5 which is in turn transformed into PC-M4 by the aromatic dimethylallyltransferase ptmE. Five sequential oxidative transformations performed by the cytochrome P450 monooxygenases ptmK, ptmU, ptmL, ptmN and ptmJ yield the various penitrem compounds. PtmK, ptmU and ptmM are involved in the formation of the key bicyclic ring of penitrem C via the formation of the intermediates secopenitrem D and penitrem D. PtmL catalyzes the epoxidation of penitrem D and C to yield penitrem B and F, respectively. PtmJ catalyzes the last benzylic hydroxylation to convert penitrem B to prenitrem E and penitrem F to penitrem A. The chain is FAD-dependent monooxygenase ptmM from Penicillium ochrochloron.